The primary structure comprises 320 residues: Lipoyl synthase (320 aa).

[4Fe-4S] cluster-binding residues include C56, C61, C67, C82, C86, C89, and S295. A Radical SAM core domain is found at W68–A284. The disordered stretch occupies residues E300–D320. Positions A303–D320 are enriched in low complexity.

Belongs to the radical SAM superfamily. Lipoyl synthase family. [4Fe-4S] cluster serves as cofactor.

It localises to the cytoplasm. It carries out the reaction [[Fe-S] cluster scaffold protein carrying a second [4Fe-4S](2+) cluster] + N(6)-octanoyl-L-lysyl-[protein] + 2 oxidized [2Fe-2S]-[ferredoxin] + 2 S-adenosyl-L-methionine + 4 H(+) = [[Fe-S] cluster scaffold protein] + N(6)-[(R)-dihydrolipoyl]-L-lysyl-[protein] + 4 Fe(3+) + 2 hydrogen sulfide + 2 5'-deoxyadenosine + 2 L-methionine + 2 reduced [2Fe-2S]-[ferredoxin]. It participates in protein modification; protein lipoylation via endogenous pathway; protein N(6)-(lipoyl)lysine from octanoyl-[acyl-carrier-protein]: step 2/2. Catalyzes the radical-mediated insertion of two sulfur atoms into the C-6 and C-8 positions of the octanoyl moiety bound to the lipoyl domains of lipoate-dependent enzymes, thereby converting the octanoylated domains into lipoylated derivatives. This chain is Lipoyl synthase, found in Symbiobacterium thermophilum (strain DSM 24528 / JCM 14929 / IAM 14863 / T).